The following is a 258-amino-acid chain: NAD(P)H-hydrate epimerase (258 aa).

Positions 15 to 244 (AFQLDQELMS…RIAKEYGIED (230 aa)) constitute a YjeF N-terminal domain. 75–79 (NNGGD) provides a ligand contact to (6S)-NADPHX. Residues asparagine 76 and aspartate 145 each contribute to the K(+) site. (6S)-NADPHX-binding positions include 149–155 (GFSFKPP) and aspartate 181. A K(+)-binding site is contributed by serine 184.

This sequence belongs to the NnrE/AIBP family. The cofactor is K(+).

Its subcellular location is the cytoplasm. It is found in the mitochondrion. It carries out the reaction (6R)-NADHX = (6S)-NADHX. It catalyses the reaction (6R)-NADPHX = (6S)-NADPHX. In terms of biological role, catalyzes the epimerization of the S- and R-forms of NAD(P)HX, a damaged form of NAD(P)H that is a result of enzymatic or heat-dependent hydration. This is a prerequisite for the S-specific NAD(P)H-hydrate dehydratase to allow the repair of both epimers of NAD(P)HX. This is NAD(P)H-hydrate epimerase from Candida albicans (strain SC5314 / ATCC MYA-2876) (Yeast).